An 85-amino-acid polypeptide reads, in one-letter code: UPF0297 protein LBUL_1485 (85 aa).

Belongs to the UPF0297 family.

This is UPF0297 protein LBUL_1485 from Lactobacillus delbrueckii subsp. bulgaricus (strain ATCC BAA-365 / Lb-18).